We begin with the raw amino-acid sequence, 523 residues long: 2-isopropylmalate synthase (523 aa).

Residues 5–267 (VIIFDTTLRD…HTAINHQEIW (263 aa)) form the Pyruvate carboxyltransferase domain. 4 residues coordinate Mn(2+): D14, H202, H204, and N238. The segment at 392–523 (RLDYFSVQSG…QHNENNKETV (132 aa)) is regulatory domain.

The protein belongs to the alpha-IPM synthase/homocitrate synthase family. LeuA type 1 subfamily. Homodimer. Mn(2+) is required as a cofactor.

It localises to the cytoplasm. It carries out the reaction 3-methyl-2-oxobutanoate + acetyl-CoA + H2O = (2S)-2-isopropylmalate + CoA + H(+). It participates in amino-acid biosynthesis; L-leucine biosynthesis; L-leucine from 3-methyl-2-oxobutanoate: step 1/4. In terms of biological role, catalyzes the condensation of the acetyl group of acetyl-CoA with 3-methyl-2-oxobutanoate (2-ketoisovalerate) to form 3-carboxy-3-hydroxy-4-methylpentanoate (2-isopropylmalate). The chain is 2-isopropylmalate synthase from Escherichia coli (strain K12 / MC4100 / BW2952).